The chain runs to 190 residues: RNA pyrophosphohydrolase (190 aa).

The Nudix hydrolase domain occupies 6–149; the sequence is GYRPNVGIIL…KRDVYTQALN (144 aa). Residues 38 to 59 carry the Nudix box motif; that stretch reads GGIKYGESPVQAMYRELHEEVG. The disordered stretch occupies residues 167 to 190; it reads QRVHGPRSTDNPSSETDGHAHIAG.

Belongs to the Nudix hydrolase family. RppH subfamily. The cofactor is a divalent metal cation.

In terms of biological role, accelerates the degradation of transcripts by removing pyrophosphate from the 5'-end of triphosphorylated RNA, leading to a more labile monophosphorylated state that can stimulate subsequent ribonuclease cleavage. In Bordetella parapertussis (strain 12822 / ATCC BAA-587 / NCTC 13253), this protein is RNA pyrophosphohydrolase.